We begin with the raw amino-acid sequence, 413 residues long: Succinate--CoA ligase [ADP-forming] subunit beta, mitochondrial (413 aa).

The N-terminal 2 residues, 1 to 2 (RR), are a transit peptide targeting the mitochondrion. One can recognise an ATP-grasp domain in the interval 11–238 (MGLLQEAGIS…SNSAYRQKKI (228 aa)). ATP-binding positions include Lys48 and 55-57 (GRG). 2 residues coordinate Mg(2+): Asn208 and Asp222. Substrate is bound by residues Asn273 and 330 to 332 (GIM).

It belongs to the succinate/malate CoA ligase beta subunit family. ATP-specific subunit beta subfamily. Heterodimer of an alpha and a beta subunit. The beta subunit determines specificity for ATP. It depends on Mg(2+) as a cofactor. Widely expressed. Not present in liver.

It localises to the mitochondrion. The catalysed reaction is succinate + ATP + CoA = succinyl-CoA + ADP + phosphate. The protein operates within carbohydrate metabolism; tricarboxylic acid cycle; succinate from succinyl-CoA (ligase route): step 1/1. Functionally, ATP-specific succinyl-CoA synthetase functions in the citric acid cycle (TCA), coupling the hydrolysis of succinyl-CoA to the synthesis of ATP and thus represents the only step of substrate-level phosphorylation in the TCA. The beta subunit provides nucleotide specificity of the enzyme and binds the substrate succinate, while the binding sites for coenzyme A and phosphate are found in the alpha subunit. The protein is Succinate--CoA ligase [ADP-forming] subunit beta, mitochondrial of Columba livia (Rock dove).